The chain runs to 118 residues: Large ribosomal subunit protein uL22c (118 aa).

It belongs to the universal ribosomal protein uL22 family. Part of the 50S ribosomal subunit.

The protein resides in the plastid. The protein localises to the chloroplast. Its function is as follows. This protein binds specifically to 23S rRNA. Functionally, the globular domain of the protein is located near the polypeptide exit tunnel on the outside of the subunit, while an extended beta-hairpin is found that lines the wall of the exit tunnel in the center of the 70S ribosome. The polypeptide is Large ribosomal subunit protein uL22c (rpl22) (Physcomitrium patens (Spreading-leaved earth moss)).